The sequence spans 431 residues: Adenylosuccinate lyase (431 aa).

N(6)-(1,2-dicarboxyethyl)-AMP contacts are provided by residues 4–5 (RY), 67–69 (RHD), and 93–94 (TS). His141 (proton donor/acceptor) is an active-site residue. Gln212 contributes to the N(6)-(1,2-dicarboxyethyl)-AMP binding site. The Proton donor/acceptor role is filled by Ser262. Residues Ser263, 268–270 (KRN), and 307–311 (SVERV) each bind N(6)-(1,2-dicarboxyethyl)-AMP.

The protein belongs to the lyase 1 family. Adenylosuccinate lyase subfamily. Homooligomer. Residues from neighboring subunits contribute catalytic and substrate-binding residues to each active site.

The enzyme catalyses N(6)-(1,2-dicarboxyethyl)-AMP = fumarate + AMP. The catalysed reaction is (2S)-2-[5-amino-1-(5-phospho-beta-D-ribosyl)imidazole-4-carboxamido]succinate = 5-amino-1-(5-phospho-beta-D-ribosyl)imidazole-4-carboxamide + fumarate. Its pathway is purine metabolism; AMP biosynthesis via de novo pathway; AMP from IMP: step 2/2. The protein operates within purine metabolism; IMP biosynthesis via de novo pathway; 5-amino-1-(5-phospho-D-ribosyl)imidazole-4-carboxamide from 5-amino-1-(5-phospho-D-ribosyl)imidazole-4-carboxylate: step 2/2. Catalyzes two reactions in de novo purine nucleotide biosynthesis. Catalyzes the breakdown of 5-aminoimidazole- (N-succinylocarboxamide) ribotide (SAICAR or 2-[5-amino-1-(5-phospho-beta-D-ribosyl)imidazole-4-carboxamido]succinate) to 5-aminoimidazole-4-carboxamide ribotide (AICAR or 5-amino-1-(5-phospho-beta-D-ribosyl)imidazole-4-carboxamide) and fumarate, and of adenylosuccinate (ADS or N(6)-(1,2-dicarboxyethyl)-AMP) to adenosine monophosphate (AMP) and fumarate. The sequence is that of Adenylosuccinate lyase (purB) from Synechocystis sp. (strain ATCC 27184 / PCC 6803 / Kazusa).